Reading from the N-terminus, the 200-residue chain is 3-isopropylmalate dehydratase small subunit (200 aa).

The protein belongs to the LeuD family. LeuD type 1 subfamily. Heterodimer of LeuC and LeuD.

The catalysed reaction is (2R,3S)-3-isopropylmalate = (2S)-2-isopropylmalate. It functions in the pathway amino-acid biosynthesis; L-leucine biosynthesis; L-leucine from 3-methyl-2-oxobutanoate: step 2/4. Functionally, catalyzes the isomerization between 2-isopropylmalate and 3-isopropylmalate, via the formation of 2-isopropylmaleate. In Arthrobacter sp. (strain FB24), this protein is 3-isopropylmalate dehydratase small subunit.